The following is a 125-amino-acid chain: Ribonuclease P protein component (125 aa).

It belongs to the RnpA family. In terms of assembly, consists of a catalytic RNA component (M1 or rnpB) and a protein subunit.

The catalysed reaction is Endonucleolytic cleavage of RNA, removing 5'-extranucleotides from tRNA precursor.. Functionally, RNaseP catalyzes the removal of the 5'-leader sequence from pre-tRNA to produce the mature 5'-terminus. It can also cleave other RNA substrates such as 4.5S RNA. The protein component plays an auxiliary but essential role in vivo by binding to the 5'-leader sequence and broadening the substrate specificity of the ribozyme. In Rhodococcus opacus (strain B4), this protein is Ribonuclease P protein component.